The sequence spans 139 residues: Holo-[acyl-carrier-protein] synthase (139 aa).

Residues Asp8 and Glu57 each coordinate Mg(2+).

The protein belongs to the P-Pant transferase superfamily. AcpS family. Mg(2+) serves as cofactor.

Its subcellular location is the cytoplasm. The catalysed reaction is apo-[ACP] + CoA = holo-[ACP] + adenosine 3',5'-bisphosphate + H(+). Functionally, transfers the 4'-phosphopantetheine moiety from coenzyme A to a Ser of acyl-carrier-protein. This Rhizobium meliloti (strain 1021) (Ensifer meliloti) protein is Holo-[acyl-carrier-protein] synthase.